The chain runs to 164 residues: Large ribosomal subunit protein uL10 (164 aa).

Belongs to the universal ribosomal protein uL10 family. As to quaternary structure, part of the ribosomal stalk of the 50S ribosomal subunit. The N-terminus interacts with L11 and the large rRNA to form the base of the stalk. The C-terminus forms an elongated spine to which L12 dimers bind in a sequential fashion forming a multimeric L10(L12)X complex.

Forms part of the ribosomal stalk, playing a central role in the interaction of the ribosome with GTP-bound translation factors. This Helicobacter pylori (strain P12) protein is Large ribosomal subunit protein uL10.